The primary structure comprises 448 residues: UPF0053 protein sll0260 (448 aa).

One can recognise a CNNM transmembrane domain in the interval 2–203; the sequence is FSSSVELELF…AQAGMIDEAE (202 aa). 4 consecutive transmembrane segments (helical) span residues 11–31, 62–82, 106–126, and 142–162; these read FFIF…IAIV, FLSA…AVGG, LSIS…GELV, and VAPA…LLGV. 2 consecutive CBS domains span residues 222 to 281 and 286 to 345; these read MTPR…GQKI and IVQP…NDDE.

The protein belongs to the UPF0053 family.

It is found in the cell membrane. The sequence is that of UPF0053 protein sll0260 from Synechocystis sp. (strain ATCC 27184 / PCC 6803 / Kazusa).